We begin with the raw amino-acid sequence, 103 residues long: Phosphoribosyl-ATP pyrophosphatase (103 aa).

Belongs to the PRA-PH family.

It localises to the cytoplasm. It carries out the reaction 1-(5-phospho-beta-D-ribosyl)-ATP + H2O = 1-(5-phospho-beta-D-ribosyl)-5'-AMP + diphosphate + H(+). It functions in the pathway amino-acid biosynthesis; L-histidine biosynthesis; L-histidine from 5-phospho-alpha-D-ribose 1-diphosphate: step 2/9. The protein is Phosphoribosyl-ATP pyrophosphatase of Cereibacter sphaeroides (strain ATCC 17029 / ATH 2.4.9) (Rhodobacter sphaeroides).